Consider the following 64-residue polypeptide: Myotoxin-2 (64 aa).

A signal peptide spans 1 to 21; sequence KILYLLFAFLFLAFLSEPGNA. Cys32 and Cys51 are oxidised to a cystine.

Belongs to the crotamine-myotoxin family. As to quaternary structure, monomer. As to expression, expressed by the venom gland.

It is found in the secreted. In terms of biological role, cationic peptide that possesses multiple functions. It acts as a cell-penetrating peptide (CPP), and as a potent voltage-gated potassium channel (Kv) inhibitor. It exhibits antimicrobial activities, hind limb paralysis, and severe muscle necrosis by a non-enzymatic mechanism. The polypeptide is Myotoxin-2 (Crotalus durissus terrificus (South American rattlesnake)).